The following is a 353-amino-acid chain: Guanine nucleotide-binding protein alpha-3 subunit (353 aa).

The N-myristoyl glycine moiety is linked to residue Gly-2. Cys-4 carries the S-palmitoyl cysteine lipid modification. Residues 32 to 353 (KVVKLLLLGA…IQANLQGCGL (322 aa)) enclose the G-alpha domain. Residues 35–48 (KLLLLGAGECGKST) are G1 motif. GTP contacts are provided by residues 40–47 (GAGECGKS), 176–182 (LLSRIKT), 201–205 (DVGGQ), 270–273 (NKKD), and Ala-326. Ser-47 and Thr-182 together coordinate Mg(2+). Residues 174–182 (DILLSRIKT) are G2 motif. Residues 197 to 206 (FRVFDVGGQR) form a G3 motif region. The interval 266-273 (ILFLNKKD) is G4 motif. Residues 324–329 (TCATDT) are G5 motif.

This sequence belongs to the G-alpha family. G(q) subfamily. G proteins are composed of 3 units; alpha, beta and gamma. The alpha chain contains the guanine nucleotide binding site.

In terms of biological role, guanine nucleotide-binding proteins (G proteins) are involved as modulators or transducers in various transmembrane signaling systems. Promotes transcription of 3',5'-cyclic phosphodiesterases pde-1 and pde-5, leading to reduced cGMP levels in sensory neurons. This causes suppression of insulin production and signaling which leads to increased daf-16 activity and contributes to increased adult lifespan and resistance to oxidative stress. In addition, by reducing cGMP levels, inhibits TGF-beta signaling pathways. Involved in behavioral response to P.aeruginosa by controlling the expression of daf-7, a member of the TGF-beta family, in ASJ sensory neurons. Plays a role in the avoidance response to the noxious chemical quinine in ASH sensory neurons. In Caenorhabditis elegans, this protein is Guanine nucleotide-binding protein alpha-3 subunit.